Here is a 600-residue protein sequence, read N- to C-terminus: Baculoviral IAP repeat-containing protein 3 (600 aa).

A BIR 1 repeat occupies 27-94; sequence ELYRLSTYSA…RKLYPSCNFV (68 aa). Serine 138 carries the post-translational modification Phosphoserine. BIR repeat units follow at residues 167–233 and 253–320; these read EKAR…CPFL and HAAR…CEYL. Positions 290, 293, 310, and 317 each coordinate Zn(2+). In terms of domain architecture, CARD spans 436-525; the sequence is EESDDLALIR…ALYRDIFVQQ (90 aa). The RING-type zinc finger occupies 553 to 588; the sequence is CKVCMDREVSIVFIPCGHLVVCKDCAPSLRKCPICR.

Belongs to the IAP family. In terms of assembly, interacts with PRSS25; the interaction inhibits apoptotic suppressor activity. The BIR motifs region interacts with TNF receptor associated factors 1 and 2 (TRAF1 and TRAF2) to form a heteromeric complex, which is then recruited to the tumor necrosis factor receptor 2 (TNFR2). Interaction with TRAF2 is required for ubiquitination of IKBKE, degradation of NFKBIA and activation of NF-kappa-B. Interacts with RIP1, RIP2, RIP3, RIP4 and USP19. Post-translationally, auto-ubiquitinated and degraded by the proteasome in apoptotic cells.

It localises to the cytoplasm. The protein localises to the nucleus. The enzyme catalyses S-ubiquitinyl-[E2 ubiquitin-conjugating enzyme]-L-cysteine + [acceptor protein]-L-lysine = [E2 ubiquitin-conjugating enzyme]-L-cysteine + N(6)-ubiquitinyl-[acceptor protein]-L-lysine.. Its activity is regulated as follows. USP19 regulates the stability of BIRC3/c-IAP2 by preventing its ubiquitination. Its function is as follows. Multi-functional protein which regulates not only caspases and apoptosis, but also modulates inflammatory signaling and immunity, mitogenic kinase signaling and cell proliferation, as well as cell invasion and metastasis. Acts as an E3 ubiquitin-protein ligase regulating NF-kappa-B signaling and regulates both canonical and non-canonical NF-kappa-B signaling by acting in opposite directions: acts as a positive regulator of the canonical pathway and suppresses constitutive activation of non-canonical NF-kappa-B signaling. The target proteins for its E3 ubiquitin-protein ligase activity include: RIPK1, RIPK2, RIPK3, RIPK4, CASP3, CASP7, CASP8, IKBKE, TRAF1, and BCL10. Acts as an important regulator of innate immune signaling via regulation of Toll-like receptors (TLRs), Nodlike receptors (NLRs) and RIG-I like receptors (RLRs), collectively referred to as pattern recognition receptors (PRRs). Protects cells from spontaneous formation of the ripoptosome, a large multi-protein complex that has the capability to kill cancer cells in a caspase-dependent and caspase-independent manner. Suppresses ripoptosome formation by ubiquitinating RIPK1 and CASP8. The sequence is that of Baculoviral IAP repeat-containing protein 3 (Birc3) from Mus musculus (Mouse).